We begin with the raw amino-acid sequence, 357 residues long: 4-hydroxymandelate synthase (357 aa).

VOC domains are found at residues 5 to 129 and 158 to 309; these read EIDY…LIQR and GIDH…IFTA. His-161 serves as a coordination point for Fe cation. 5 residues coordinate substrate: His-161, Ser-201, Thr-214, His-241, and Gln-305. His-241 is a binding site for Fe cation. Residue Glu-320 participates in Fe cation binding.

This sequence belongs to the 4HPPD family. In terms of assembly, monomer. The cofactor is Fe cation.

It carries out the reaction 3-(4-hydroxyphenyl)pyruvate + O2 = (S)-4-hydroxymandelate + CO2. It functions in the pathway antibiotic biosynthesis; vancomycin biosynthesis. Its function is as follows. Required to synthesize hydroxyphenylglycine, a recurring skeletal component of nonproteinogenic macrocyclic peptide antibiotics such as vancomycin. Catalyzes the conversion of p-hydroxyphenylpyruvate to p-hydroxymandelate. The decarboxylation and hydroxylation activities of HmaS show novel and distinct regioselectivity, compared to all other known p-hydroxyphenylpyruvate dioxygenases, by hydroxylating the benzylic position of the substrate instead of the phenyl ring. In Amycolatopsis orientalis (Nocardia orientalis), this protein is 4-hydroxymandelate synthase.